A 693-amino-acid chain; its full sequence is Polyribonucleotide nucleotidyltransferase (693 aa).

The Mg(2+) site is built by Asp486 and Asp492. The KH domain maps to 553–612 (PRIHTIKINPEKIKDVIGKGGSVIRMLTEETGTTIEIEDDGTVKISAVMQEKAKCAIQRI). Residues 622-690 (GSVYTGKVTR…RQGRLRLSIK (69 aa)) enclose the S1 motif domain.

The protein belongs to the polyribonucleotide nucleotidyltransferase family. As to quaternary structure, component of the RNA degradosome, which is a multiprotein complex involved in RNA processing and mRNA degradation. Requires Mg(2+) as cofactor.

It localises to the cytoplasm. It catalyses the reaction RNA(n+1) + phosphate = RNA(n) + a ribonucleoside 5'-diphosphate. In terms of biological role, involved in mRNA degradation. Catalyzes the phosphorolysis of single-stranded polyribonucleotides processively in the 3'- to 5'-direction. The sequence is that of Polyribonucleotide nucleotidyltransferase from Buchnera aphidicola subsp. Baizongia pistaciae (strain Bp).